Consider the following 218-residue polypeptide: Ribose-5-phosphate isomerase A (218 aa).

Substrate-binding positions include 28-31 (TGST), 81-84 (DGAD), and 94-97 (KGGG). E103 serves as the catalytic Proton acceptor. Substrate is bound at residue K121.

It belongs to the ribose 5-phosphate isomerase family. In terms of assembly, homodimer.

It catalyses the reaction aldehydo-D-ribose 5-phosphate = D-ribulose 5-phosphate. It functions in the pathway carbohydrate degradation; pentose phosphate pathway; D-ribose 5-phosphate from D-ribulose 5-phosphate (non-oxidative stage): step 1/1. In terms of biological role, catalyzes the reversible conversion of ribose-5-phosphate to ribulose 5-phosphate. The sequence is that of Ribose-5-phosphate isomerase A from Alcanivorax borkumensis (strain ATCC 700651 / DSM 11573 / NCIMB 13689 / SK2).